A 351-amino-acid chain; its full sequence is Transmembrane protein 255A (351 aa).

The next 4 helical transmembrane spans lie at 30-50 (IYVT…GLAA), 57-77 (VTVG…LGII), 89-109 (LVAS…CAIV), and 226-246 (TILN…LGGF). A disordered region spans residues 302–331 (FPSSPPSGLSDEQEPQSPSPSPSYMWSSSA).

The protein belongs to the TMEM255 family.

The protein resides in the membrane. The protein is Transmembrane protein 255A (Tmem255a) of Mus musculus (Mouse).